The following is a 91-amino-acid chain: DNA-binding protein HU-beta 2 (91 aa).

It belongs to the bacterial histone-like protein family.

Functionally, histone-like DNA-binding protein which is capable of wrapping DNA to stabilize it, and thus to prevent its denaturation under extreme environmental conditions. The sequence is that of DNA-binding protein HU-beta 2 (hupB2) from Neisseria meningitidis serogroup A / serotype 4A (strain DSM 15465 / Z2491).